The chain runs to 201 residues: Protein GrpE (201 aa).

The protein belongs to the GrpE family. In terms of assembly, homodimer.

It is found in the cytoplasm. Participates actively in the response to hyperosmotic and heat shock by preventing the aggregation of stress-denatured proteins, in association with DnaK and GrpE. It is the nucleotide exchange factor for DnaK and may function as a thermosensor. Unfolded proteins bind initially to DnaJ; upon interaction with the DnaJ-bound protein, DnaK hydrolyzes its bound ATP, resulting in the formation of a stable complex. GrpE releases ADP from DnaK; ATP binding to DnaK triggers the release of the substrate protein, thus completing the reaction cycle. Several rounds of ATP-dependent interactions between DnaJ, DnaK and GrpE are required for fully efficient folding. The sequence is that of Protein GrpE from Shewanella denitrificans (strain OS217 / ATCC BAA-1090 / DSM 15013).